The chain runs to 141 residues: Nucleoside diphosphate kinase (141 aa).

ATP is bound by residues K11, F59, R87, T93, R104, and N114. H117 serves as the catalytic Pros-phosphohistidine intermediate.

This sequence belongs to the NDK family. Homotetramer. Requires Mg(2+) as cofactor.

The protein resides in the cytoplasm. It catalyses the reaction a 2'-deoxyribonucleoside 5'-diphosphate + ATP = a 2'-deoxyribonucleoside 5'-triphosphate + ADP. The catalysed reaction is a ribonucleoside 5'-diphosphate + ATP = a ribonucleoside 5'-triphosphate + ADP. In terms of biological role, major role in the synthesis of nucleoside triphosphates other than ATP. The ATP gamma phosphate is transferred to the NDP beta phosphate via a ping-pong mechanism, using a phosphorylated active-site intermediate. This chain is Nucleoside diphosphate kinase, found in Janthinobacterium sp. (strain Marseille) (Minibacterium massiliensis).